A 212-amino-acid chain; its full sequence is Thiamine-phosphate synthase (212 aa).

4-amino-2-methyl-5-(diphosphooxymethyl)pyrimidine-binding positions include 40-44 and N75; that span reads QFREK. Mg(2+) is bound by residues D76 and D95. S113 contributes to the 4-amino-2-methyl-5-(diphosphooxymethyl)pyrimidine binding site. 139-141 provides a ligand contact to 2-[(2R,5Z)-2-carboxy-4-methylthiazol-5(2H)-ylidene]ethyl phosphate; the sequence is TTS. A 4-amino-2-methyl-5-(diphosphooxymethyl)pyrimidine-binding site is contributed by K142. Residues G171 and 191-192 each bind 2-[(2R,5Z)-2-carboxy-4-methylthiazol-5(2H)-ylidene]ethyl phosphate; that span reads IS.

Belongs to the thiamine-phosphate synthase family. It depends on Mg(2+) as a cofactor.

The catalysed reaction is 2-[(2R,5Z)-2-carboxy-4-methylthiazol-5(2H)-ylidene]ethyl phosphate + 4-amino-2-methyl-5-(diphosphooxymethyl)pyrimidine + 2 H(+) = thiamine phosphate + CO2 + diphosphate. It catalyses the reaction 2-(2-carboxy-4-methylthiazol-5-yl)ethyl phosphate + 4-amino-2-methyl-5-(diphosphooxymethyl)pyrimidine + 2 H(+) = thiamine phosphate + CO2 + diphosphate. The enzyme catalyses 4-methyl-5-(2-phosphooxyethyl)-thiazole + 4-amino-2-methyl-5-(diphosphooxymethyl)pyrimidine + H(+) = thiamine phosphate + diphosphate. It functions in the pathway cofactor biosynthesis; thiamine diphosphate biosynthesis; thiamine phosphate from 4-amino-2-methyl-5-diphosphomethylpyrimidine and 4-methyl-5-(2-phosphoethyl)-thiazole: step 1/1. Condenses 4-methyl-5-(beta-hydroxyethyl)thiazole monophosphate (THZ-P) and 2-methyl-4-amino-5-hydroxymethyl pyrimidine pyrophosphate (HMP-PP) to form thiamine monophosphate (TMP). This chain is Thiamine-phosphate synthase, found in Staphylococcus saprophyticus subsp. saprophyticus (strain ATCC 15305 / DSM 20229 / NCIMB 8711 / NCTC 7292 / S-41).